A 1588-amino-acid chain; its full sequence is Autotransporter adhesin EhaG (1588 aa).

An N-terminal signal peptide occupies residues 1–53 (MNKIFKVIWNPATGNYTVTSETAKSRGKKSGRSKLLISALVAGGMLSSFGALA). Residues 54–1499 (NAGNDNGQGV…QETKQYTDQR (1446 aa)) are surface exposed passenger domain. The interval 1500 to 1588 (MVEMDNKLSK…SAALGAGIQW (89 aa)) is translocator domain. The next 4 beta stranded transmembrane spans lie at 1534-1544 (GASMASIGGGT), 1548-1558 (ESAVALGVSMV), 1567-1573 (KLQGSTN), and 1577-1588 (EYSAALGAGIQW).

It belongs to the autotransporter-2 (AT-2) (TC 1.B.40) family. Homotrimer.

Its subcellular location is the cell surface. It is found in the cell outer membrane. Mediates aggregation, biofilm formation and adhesion to a range of extracellular matrix (ECM) proteins, such as fibronectin, fibrinogen, laminin and collagen types I, II, III, and V. Mediates adhesion to intestinal epithelial cells. The sequence is that of Autotransporter adhesin EhaG from Escherichia coli O157:H7.